Consider the following 586-residue polypeptide: Arginine--tRNA ligase (586 aa).

Positions 128–138 (ANPTGPLHVGH) match the 'HIGH' region motif.

It belongs to the class-I aminoacyl-tRNA synthetase family. As to quaternary structure, monomer.

The protein resides in the cytoplasm. It carries out the reaction tRNA(Arg) + L-arginine + ATP = L-arginyl-tRNA(Arg) + AMP + diphosphate. The protein is Arginine--tRNA ligase of Legionella pneumophila (strain Corby).